The sequence spans 255 residues: tRNA (guanine-N(1)-)-methyltransferase (255 aa).

Residues Gly-113 and 133-138 contribute to the S-adenosyl-L-methionine site; that span reads IGDYVL.

This sequence belongs to the RNA methyltransferase TrmD family. Homodimer.

The protein localises to the cytoplasm. It carries out the reaction guanosine(37) in tRNA + S-adenosyl-L-methionine = N(1)-methylguanosine(37) in tRNA + S-adenosyl-L-homocysteine + H(+). Functionally, specifically methylates guanosine-37 in various tRNAs. The polypeptide is tRNA (guanine-N(1)-)-methyltransferase (Enterobacter sp. (strain 638)).